The chain runs to 565 residues: Proline--tRNA ligase (565 aa).

It belongs to the class-II aminoacyl-tRNA synthetase family. ProS type 1 subfamily. As to quaternary structure, homodimer.

Its subcellular location is the cytoplasm. It catalyses the reaction tRNA(Pro) + L-proline + ATP = L-prolyl-tRNA(Pro) + AMP + diphosphate. Its function is as follows. Catalyzes the attachment of proline to tRNA(Pro) in a two-step reaction: proline is first activated by ATP to form Pro-AMP and then transferred to the acceptor end of tRNA(Pro). As ProRS can inadvertently accommodate and process non-cognate amino acids such as alanine and cysteine, to avoid such errors it has two additional distinct editing activities against alanine. One activity is designated as 'pretransfer' editing and involves the tRNA(Pro)-independent hydrolysis of activated Ala-AMP. The other activity is designated 'posttransfer' editing and involves deacylation of mischarged Ala-tRNA(Pro). The misacylated Cys-tRNA(Pro) is not edited by ProRS. This Francisella philomiragia subsp. philomiragia (strain ATCC 25017 / CCUG 19701 / FSC 153 / O#319-036) protein is Proline--tRNA ligase.